We begin with the raw amino-acid sequence, 141 residues long: Hemoglobin subunit alpha (141 aa).

The 141-residue stretch at 1-141 (VLSDKDKTNV…VSTVLTSKYR (141 aa)) folds into the Globin domain. The residue at position 3 (S3) is a Phosphoserine. The residue at position 7 (K7) is an N6-succinyllysine. The residue at position 8 (T8) is a Phosphothreonine. At K11 the chain carries N6-succinyllysine. The residue at position 16 (K16) is an N6-acetyllysine; alternate. N6-succinyllysine; alternate is present on K16. Y24 carries the post-translational modification Phosphotyrosine. S35 carries the post-translational modification Phosphoserine. K40 bears the N6-succinyllysine mark. Position 49 is a phosphoserine (S49). Residue H58 participates in O2 binding. H87 serves as a coordination point for heme b. A Phosphoserine modification is found at S102. A Phosphothreonine modification is found at T108. Phosphoserine is present on S124. Phosphothreonine occurs at positions 134 and 137. Phosphoserine is present on S138.

Belongs to the globin family. Heterotetramer of two alpha chains and two beta chains. As to expression, red blood cells.

Functionally, involved in oxygen transport from the lung to the various peripheral tissues. In terms of biological role, hemopressin acts as an antagonist peptide of the cannabinoid receptor CNR1. Hemopressin-binding efficiently blocks cannabinoid receptor CNR1 and subsequent signaling. In Elephas maximus (Indian elephant), this protein is Hemoglobin subunit alpha (HBA).